The sequence spans 1049 residues: ABC transporter ATM1 (1049 aa).

Residues 1 to 90 (MRSFYNKCFT…NIFKNKGRLY (90 aa)) constitute a mitochondrion transit peptide. 6 helical membrane-spanning segments follow: residues 357 to 377 (IFCS…TPIL), 397 to 419 (IYST…VLSS), 481 to 501 (VMVF…YILT), 506 to 526 (YTVS…TTLI), 591 to 611 (FLNF…MYLT), and 619 to 639 (IFPF…AMPL). The ABC transmembrane type-1 domain maps to 360–651 (SLFFLLCSKM…FGTIYRETKL (292 aa)). Residues 807–1043 (LKNHKIINNS…NHFYREYYDS (237 aa)) enclose the ABC transporter domain. 843 to 850 (GKSGSGKS) is an ATP binding site.

It belongs to the ABC transporter superfamily. ABCB family. Heavy Metal importer (TC 3.A.1.210) subfamily. Homodimer. Interacts with ISCU. Interacts with IscA2. Interacts with NBP35. Interacts with mHCF101.

The protein localises to the mitochondrion membrane. With respect to regulation, ATPase activity is stimulated by reduced glutathione. Functionally, transports glutathione-coordinated [4Fe-4S] iron-sulfur clusters in an ATP-dependent manner. Required for optimal parasite growth during erythrocytic stages. The sequence is that of ABC transporter ATM1 from Plasmodium falciparum (isolate 3D7).